A 295-amino-acid polypeptide reads, in one-letter code: Transcription factor bHLH19 (295 aa).

In terms of domain architecture, bHLH spans 115-164; it reads VLAKEHVLAERKRREKLSEKFIALSALLPGLKKADKVTILDDAISRMKQL.

As to quaternary structure, homodimer. As to expression, expressed in roots and leaves.

Its subcellular location is the nucleus. The chain is Transcription factor bHLH19 (BHLH19) from Arabidopsis thaliana (Mouse-ear cress).